Here is a 297-residue protein sequence, read N- to C-terminus: NADPH-dependent 1-acyldihydroxyacetone phosphate reductase (297 aa).

The GXSXG signature appears at 16-20 (GASGG). The active-site Nucleophile; for lipase activity is the Ser18. NADP(+) contacts are provided by Ile21, Asp64, Asn93, Arg126, Tyr157, Lys161, Val190, and Thr192. Tyr157 acts as the Proton acceptor in catalysis. The active-site Lowers pKa of active site Tyr is Lys161.

The protein belongs to the short-chain dehydrogenases/reductases (SDR) family.

Its subcellular location is the lipid droplet. The protein resides in the mitochondrion outer membrane. It is found in the endoplasmic reticulum. It carries out the reaction a 1-acylglycerone 3-phosphate + NADPH + H(+) = a 1-acyl-sn-glycero-3-phosphate + NADP(+). The catalysed reaction is 1-hexadecanoyl-sn-glycero-3-phosphate + NADP(+) = 1-hexadecanoylglycerone 3-phosphate + NADPH + H(+). The enzyme catalyses a triacylglycerol + H2O = a diacylglycerol + a fatty acid + H(+). It catalyses the reaction 1,2,3-tri-(9Z-octadecenoyl)-glycerol + H2O = di-(9Z)-octadecenoylglycerol + (9Z)-octadecenoate + H(+). With respect to regulation, inhibited by divalent cations and N-ethylmaleimide. Activity is reduced under anaerobic growth conditions. Functionally, can convert acyl and alkyl dihydroxyacetone-phosphate (DHAP) into glycerolipids and ether lipids, respectively. Required for the biosynthesis of phosphatidic acid via the DHAP pathway, where it reduces 1-acyl DHAP to lysophosphatidic acid (LPA). Also has triacylglycerol (TAG) lipase activity. Involved in the mobilization of the non-polar storage lipids triacylglycerols (TAGs) from lipid particles by hydrolysis of TAGs. Required for spore germination. Plays a role in cell wall biogenesis, but this effect may be indirect by affecting the activities of cell wall synthesis enzymes. Lipolysis of TAG by AYR1 is essential for starvation-induced autophagy. Forms an NADPH-regulated cation-selective channel in the mitochondrial outer membrane. This Saccharomyces cerevisiae (strain ATCC 204508 / S288c) (Baker's yeast) protein is NADPH-dependent 1-acyldihydroxyacetone phosphate reductase.